We begin with the raw amino-acid sequence, 164 residues long: Vesiculogenesis and immune response regulator (164 aa).

Post-translationally, could be O-mannosylated. Is likely mannosylated on Thr-61 when overexpressed in M.smegmatis.

It is found in the cell inner membrane. The protein resides in the cytoplasm. Virulence factor that regulates vesiculogenesis. Acts by regulating the production of mycobacterial membrane vesicles (MV) bearing Toll-like receptor 2 (TLR2) ligands, including the lipoproteins LpqH, a major host TLR2 agonist, and SodC. By restraining the release of most of the material that activates host cells through TLR2, VirR reduces the immunostimulant potential of M.tuberculosis and increases its virulence. May contribute to cell envelope integrity. Its function is as follows. When overexpressed in M.smegmatis, it modulates the production of IL-10, IL-12 p40 and TNF-alpha by RAW264.7 macrophages and it decreases the killing of M.smegmatis. This is Vesiculogenesis and immune response regulator from Mycobacterium tuberculosis (strain ATCC 25618 / H37Rv).